The sequence spans 208 residues: Putative speedy protein E7 (208 aa).

It belongs to the Speedy/Ringo family.

The protein is Putative speedy protein E7 (SPDYE7P) of Homo sapiens (Human).